Here is a 116-residue protein sequence, read N- to C-terminus: Large ribosomal subunit protein bL19 (116 aa).

Belongs to the bacterial ribosomal protein bL19 family.

Its function is as follows. This protein is located at the 30S-50S ribosomal subunit interface and may play a role in the structure and function of the aminoacyl-tRNA binding site. This chain is Large ribosomal subunit protein bL19, found in Streptomyces avermitilis (strain ATCC 31267 / DSM 46492 / JCM 5070 / NBRC 14893 / NCIMB 12804 / NRRL 8165 / MA-4680).